The sequence spans 441 residues: Methylenetetrahydrofolate--tRNA-(uracil-5-)-methyltransferase TrmFO (441 aa).

11–16 (GGGLAG) provides a ligand contact to FAD.

The protein belongs to the MnmG family. TrmFO subfamily. It depends on FAD as a cofactor.

The protein localises to the cytoplasm. It carries out the reaction uridine(54) in tRNA + (6R)-5,10-methylene-5,6,7,8-tetrahydrofolate + NADH + H(+) = 5-methyluridine(54) in tRNA + (6S)-5,6,7,8-tetrahydrofolate + NAD(+). The enzyme catalyses uridine(54) in tRNA + (6R)-5,10-methylene-5,6,7,8-tetrahydrofolate + NADPH + H(+) = 5-methyluridine(54) in tRNA + (6S)-5,6,7,8-tetrahydrofolate + NADP(+). In terms of biological role, catalyzes the folate-dependent formation of 5-methyl-uridine at position 54 (M-5-U54) in all tRNAs. The protein is Methylenetetrahydrofolate--tRNA-(uracil-5-)-methyltransferase TrmFO of Syntrophus aciditrophicus (strain SB).